We begin with the raw amino-acid sequence, 642 residues long: Phosphomethylpyrimidine synthase (642 aa).

Substrate contacts are provided by residues Asn-235, Met-264, Tyr-293, His-329, Ser-349 to Gly-351, Asp-390 to Arg-393, and Glu-429. Residue His-433 participates in Zn(2+) binding. Tyr-456 lines the substrate pocket. Residue His-497 participates in Zn(2+) binding. [4Fe-4S] cluster-binding residues include Cys-577, Cys-580, and Cys-585.

Belongs to the ThiC family. In terms of assembly, homodimer. [4Fe-4S] cluster is required as a cofactor.

It carries out the reaction 5-amino-1-(5-phospho-beta-D-ribosyl)imidazole + S-adenosyl-L-methionine = 4-amino-2-methyl-5-(phosphooxymethyl)pyrimidine + CO + 5'-deoxyadenosine + formate + L-methionine + 3 H(+). It participates in cofactor biosynthesis; thiamine diphosphate biosynthesis. Functionally, catalyzes the synthesis of the hydroxymethylpyrimidine phosphate (HMP-P) moiety of thiamine from aminoimidazole ribotide (AIR) in a radical S-adenosyl-L-methionine (SAM)-dependent reaction. This chain is Phosphomethylpyrimidine synthase, found in Alteromonas mediterranea (strain DSM 17117 / CIP 110805 / LMG 28347 / Deep ecotype).